The following is a 397-amino-acid chain: Protein-glutamate methylesterase/protein-glutamine glutaminase of group 2 operon (397 aa).

In terms of domain architecture, Response regulatory spans 21 to 139; it reads RVMIVDDSVV…EASAADTFHH (119 aa). Aspartate 72 carries the 4-aspartylphosphate modification. The CheB-type methylesterase domain occupies 199 to 388; the sequence is PFSTLAPKVL…LPLNQIGAKV (190 aa). Residues serine 213, histidine 241, and aspartate 337 contribute to the active site.

It belongs to the CheB family. Post-translationally, phosphorylated by CheA. Phosphorylation of the N-terminal regulatory domain activates the methylesterase activity.

Its subcellular location is the cytoplasm. The catalysed reaction is [protein]-L-glutamate 5-O-methyl ester + H2O = L-glutamyl-[protein] + methanol + H(+). It carries out the reaction L-glutaminyl-[protein] + H2O = L-glutamyl-[protein] + NH4(+). In terms of biological role, involved in chemotaxis. Part of a chemotaxis signal transduction system that modulates chemotaxis in response to various stimuli. Catalyzes the demethylation of specific methylglutamate residues introduced into the chemoreceptors (methyl-accepting chemotaxis proteins or MCP) by CheR. Also mediates the irreversible deamidation of specific glutamine residues to glutamic acid. The polypeptide is Protein-glutamate methylesterase/protein-glutamine glutaminase of group 2 operon (Bradyrhizobium diazoefficiens (strain JCM 10833 / BCRC 13528 / IAM 13628 / NBRC 14792 / USDA 110)).